A 71-amino-acid chain; its full sequence is UPF0346 protein SUB0487 (71 aa).

This sequence belongs to the UPF0346 family.

The protein is UPF0346 protein SUB0487 of Streptococcus uberis (strain ATCC BAA-854 / 0140J).